We begin with the raw amino-acid sequence, 258 residues long: Myogenic factor 5 (258 aa).

The tract at residues 21 to 50 (LSSPEGEFPEDFEPRELPPFGAPAPTEPAC) is disordered. The bHLH domain maps to 85 to 136 (DRRKAATMRERRRLKKVNQAFETLKRCTTANPNQRLPKVEILRNAIRYIESL). Residues 220-258 (AEEPGLPLRHAGSLSPGASIDSGPGTPGSPPPRRTYQAL) form a disordered region.

In terms of assembly, efficient DNA binding requires dimerization with another bHLH protein.

The protein localises to the nucleus. Functionally, acts as a transcriptional activator that promotes transcription of muscle-specific target genes and plays a role in muscle differentiation. Induces fibroblasts to differentiate into myoblasts. Probable sequence specific DNA-binding protein. This is Myogenic factor 5 (MYF5) from Gallus gallus (Chicken).